A 206-amino-acid chain; its full sequence is MATNITHHAGITRNERNQLRKQKGLTIWLTGLSASGKSTIAVELEHQLLQRGLHAYRLDGDNVRFGLNKDLGFSDADRNENIRRIAEVAKLFADSSSIAITSFISPFRADRDTARKLHEVPTPNDSTGLPFVEVFVDVPIEVAEKRDPKGLYKKAREGIIKEFTGISSPYEAPENPEVHVKNVDLPIQEAVKQIIDYLDSKKLLDA.

31 to 38 (GLSASGKS) lines the ATP pocket. Ser105 acts as the Phosphoserine intermediate in catalysis.

It belongs to the APS kinase family.

The enzyme catalyses adenosine 5'-phosphosulfate + ATP = 3'-phosphoadenylyl sulfate + ADP + H(+). Its pathway is sulfur metabolism; hydrogen sulfide biosynthesis; sulfite from sulfate: step 2/3. Its function is as follows. Catalyzes the synthesis of activated sulfate. This chain is Adenylyl-sulfate kinase (sD), found in Emericella nidulans (strain FGSC A4 / ATCC 38163 / CBS 112.46 / NRRL 194 / M139) (Aspergillus nidulans).